A 420-amino-acid chain; its full sequence is Carboxypeptidase A4 (420 aa).

Positions 1–16 (MKWLLFFGALIGAGIC) are cleaved as a signal peptide. Residues 17-113 (GRDKFFGDQV…EMQHNEGIER (97 aa)) constitute a propeptide, activation peptide. Proline 69, valine 71, asparagine 118, tyrosine 122, histidine 123, glutamate 126, and phenylalanine 162 together coordinate a protein. Positions 121-415 (AYHPLEAIYH…LGLKTIMEHV (295 aa)) constitute a Peptidase M14 domain. Zn(2+)-binding residues include histidine 180 and glutamate 183. Residues cysteine 249 and cysteine 272 are joined by a disulfide bond. Residue asparagine 259 is glycosylated (N-linked (GlcNAc...) asparagine). Residue histidine 307 participates in Zn(2+) binding. The active-site Proton donor/acceptor is glutamate 381.

The protein belongs to the peptidase M14 family. In terms of assembly, interacts with LXN. It depends on Zn(2+) as a cofactor.

The protein localises to the secreted. Metalloprotease that cleaves hydrophobic C-terminal residues with a preference for -Phe, -Leu, -Ile, -Met, -Tyr and -Val. May function in peptide hormone and/or neuropeptide catabolism. The sequence is that of Carboxypeptidase A4 (Cpa4) from Mus musculus (Mouse).